The primary structure comprises 558 residues: Membrane protein insertase YidC (558 aa).

Helical transmembrane passes span 3–23, 364–384, 438–458, 477–497, and 508–528; these read IKRT…FDNW, FVGN…AVFF, LPVV…LASV, PYFI…KLNP, and MMFM…GLVL.

Belongs to the OXA1/ALB3/YidC family. Type 1 subfamily. In terms of assembly, interacts with the Sec translocase complex via SecD. Specifically interacts with transmembrane segments of nascent integral membrane proteins during membrane integration.

It localises to the cell inner membrane. Its function is as follows. Required for the insertion and/or proper folding and/or complex formation of integral membrane proteins into the membrane. Involved in integration of membrane proteins that insert both dependently and independently of the Sec translocase complex, as well as at least some lipoproteins. Aids folding of multispanning membrane proteins. The polypeptide is Membrane protein insertase YidC (Burkholderia pseudomallei (strain K96243)).